A 488-amino-acid chain; its full sequence is Glutamyl-tRNA(Gln) amidotransferase subunit A (488 aa).

Active-site charge relay system residues include Lys77 and Ser152. Ser176 functions as the Acyl-ester intermediate in the catalytic mechanism.

Belongs to the amidase family. GatA subfamily. In terms of assembly, heterotrimer of A, B and C subunits.

The catalysed reaction is L-glutamyl-tRNA(Gln) + L-glutamine + ATP + H2O = L-glutaminyl-tRNA(Gln) + L-glutamate + ADP + phosphate + H(+). Allows the formation of correctly charged Gln-tRNA(Gln) through the transamidation of misacylated Glu-tRNA(Gln) in organisms which lack glutaminyl-tRNA synthetase. The reaction takes place in the presence of glutamine and ATP through an activated gamma-phospho-Glu-tRNA(Gln). This chain is Glutamyl-tRNA(Gln) amidotransferase subunit A, found in Streptococcus pyogenes serotype M6 (strain ATCC BAA-946 / MGAS10394).